A 172-amino-acid chain; its full sequence is NADH-ubiquinone oxidoreductase chain 6 (172 aa).

The next 5 membrane-spanning stretches (helical) occupy residues 1–21 (MTYF…AVAS), 27–47 (YGVV…LSLG), 48–68 (VSFV…VVFV), 87–107 (VVGY…VGGF), and 138–158 (CGVG…FVVL).

Belongs to the complex I subunit 6 family.

Its subcellular location is the mitochondrion membrane. It catalyses the reaction a ubiquinone + NADH + 5 H(+)(in) = a ubiquinol + NAD(+) + 4 H(+)(out). In terms of biological role, core subunit of the mitochondrial membrane respiratory chain NADH dehydrogenase (Complex I) that is believed to belong to the minimal assembly required for catalysis. Complex I functions in the transfer of electrons from NADH to the respiratory chain. The immediate electron acceptor for the enzyme is believed to be ubiquinone. The chain is NADH-ubiquinone oxidoreductase chain 6 (MT-ND6) from Uria lomvia (Thick-billed murre).